A 547-amino-acid polypeptide reads, in one-letter code: Chaperonin GroEL (547 aa).

Residues Thr30–Pro33, Lys51, Asp87–Thr91, Gly415, and Asp496 each bind ATP.

The protein belongs to the chaperonin (HSP60) family. Forms a cylinder of 14 subunits composed of two heptameric rings stacked back-to-back. Interacts with the co-chaperonin GroES.

The protein resides in the cytoplasm. The enzyme catalyses ATP + H2O + a folded polypeptide = ADP + phosphate + an unfolded polypeptide.. Together with its co-chaperonin GroES, plays an essential role in assisting protein folding. The GroEL-GroES system forms a nano-cage that allows encapsulation of the non-native substrate proteins and provides a physical environment optimized to promote and accelerate protein folding. The sequence is that of Chaperonin GroEL from Histophilus somni (strain 129Pt) (Haemophilus somnus).